The following is a 492-amino-acid chain: Ferruginol synthase (492 aa).

A helical membrane pass occupies residues 1–21 (METIALLAALFFIALTCFLTS). Topologically, residues 22–492 (GRRRNLPPGP…VPLKIIPLRP (471 aa)) are cytoplasmic. C436 provides a ligand contact to heme.

The protein belongs to the cytochrome P450 family. Requires heme as cofactor.

It localises to the endoplasmic reticulum membrane. It catalyses the reaction abieta-8,11,13-triene + reduced [NADPH--hemoprotein reductase] + O2 = ferruginol + oxidized [NADPH--hemoprotein reductase] + H2O + H(+). It functions in the pathway secondary metabolite biosynthesis; terpenoid biosynthesis. Functionally, cytochrome P450 enzyme (CYP) which catalyzes a unique two-electron oxidation cascade on abieta-8,11,13-triene to produce ferruginol, an intermediate in tanshinone biosynthesis. The sequence is that of Ferruginol synthase from Isodon rubescens (Rabdosia rubescens).